The chain runs to 331 residues: Ketol-acid reductoisomerase (NADP(+)) (331 aa).

The 181-residue stretch at 2-182 folds into the KARI N-terminal Rossmann domain; it reads AKMYYDKDAD…GGTRAGVIET (181 aa). Residues 25 to 28, Ser51, Ser53, and 83 to 86 contribute to the NADP(+) site; these read FGSQ and DEKQ. The active site involves His108. Gly134 provides a ligand contact to NADP(+). The 146-residue stretch at 183-328 folds into the KARI C-terminal knotted domain; sequence TFKEETETDL…KGLREMMAWI (146 aa). Asp191, Glu195, Glu227, and Glu231 together coordinate Mg(2+). Position 252 (Ser252) interacts with substrate.

This sequence belongs to the ketol-acid reductoisomerase family. The cofactor is Mg(2+).

It catalyses the reaction (2R)-2,3-dihydroxy-3-methylbutanoate + NADP(+) = (2S)-2-acetolactate + NADPH + H(+). It carries out the reaction (2R,3R)-2,3-dihydroxy-3-methylpentanoate + NADP(+) = (S)-2-ethyl-2-hydroxy-3-oxobutanoate + NADPH + H(+). Its pathway is amino-acid biosynthesis; L-isoleucine biosynthesis; L-isoleucine from 2-oxobutanoate: step 2/4. It functions in the pathway amino-acid biosynthesis; L-valine biosynthesis; L-valine from pyruvate: step 2/4. In terms of biological role, involved in the biosynthesis of branched-chain amino acids (BCAA). Catalyzes an alkyl-migration followed by a ketol-acid reduction of (S)-2-acetolactate (S2AL) to yield (R)-2,3-dihydroxy-isovalerate. In the isomerase reaction, S2AL is rearranged via a Mg-dependent methyl migration to produce 3-hydroxy-3-methyl-2-ketobutyrate (HMKB). In the reductase reaction, this 2-ketoacid undergoes a metal-dependent reduction by NADPH to yield (R)-2,3-dihydroxy-isovalerate. This is Ketol-acid reductoisomerase (NADP(+)) from Thermoanaerobacter pseudethanolicus (strain ATCC 33223 / 39E) (Clostridium thermohydrosulfuricum).